A 208-amino-acid polypeptide reads, in one-letter code: 3-demethoxyubiquinol 3-hydroxylase (208 aa).

Residues E57, E87, H90, E139, E171, and H174 each contribute to the Fe cation site.

Belongs to the COQ7 family. The cofactor is Fe cation.

The protein localises to the cell membrane. It carries out the reaction a 5-methoxy-2-methyl-3-(all-trans-polyprenyl)benzene-1,4-diol + AH2 + O2 = a 3-demethylubiquinol + A + H2O. It functions in the pathway cofactor biosynthesis; ubiquinone biosynthesis. In terms of biological role, catalyzes the hydroxylation of 2-nonaprenyl-3-methyl-6-methoxy-1,4-benzoquinol during ubiquinone biosynthesis. The polypeptide is 3-demethoxyubiquinol 3-hydroxylase (Burkholderia ambifaria (strain MC40-6)).